A 182-amino-acid chain; its full sequence is Adenine phosphoribosyltransferase (182 aa).

The protein belongs to the purine/pyrimidine phosphoribosyltransferase family. Homodimer.

It localises to the cytoplasm. It catalyses the reaction AMP + diphosphate = 5-phospho-alpha-D-ribose 1-diphosphate + adenine. Its pathway is purine metabolism; AMP biosynthesis via salvage pathway; AMP from adenine: step 1/1. In terms of biological role, catalyzes a salvage reaction resulting in the formation of AMP, that is energically less costly than de novo synthesis. This is Adenine phosphoribosyltransferase from Stutzerimonas stutzeri (strain A1501) (Pseudomonas stutzeri).